Here is a 125-residue protein sequence, read N- to C-terminus: uncharacterized protein (125 aa).

A coiled-coil region spans residues 5 to 33 (NLTVEQLAAELTKLQMENSHLKRKLRRSV). Disordered stretches follow at residues 22-50 (NSHL…TEPE) and 96-125 (FRLH…GQQQ). 2 stretches are compositionally biased toward basic and acidic residues: residues 39–50 (EPPKPRELTEPE) and 96–112 (FRLH…EKKL). Residues 113–125 (SKEKRRTARGQQQ) show a composition bias toward basic residues.

The protein belongs to the herpesviridae BLRF2 family.

This is an uncharacterized protein from Connochaetes taurinus (Blue wildebeest).